We begin with the raw amino-acid sequence, 296 residues long: Acetyl-coenzyme A carboxylase carboxyl transferase subunit beta (296 aa).

Positions 26-295 (VWTKCTNCEQ…PFKVGELIIE (270 aa)) constitute a CoA carboxyltransferase N-terminal domain. Zn(2+) contacts are provided by Cys-30, Cys-33, Cys-49, and Cys-52. The C4-type zinc finger occupies 30-52 (CTNCEQVLYSEELKRNMQVCPKC).

Belongs to the AccD/PCCB family. In terms of assembly, acetyl-CoA carboxylase is a heterohexamer composed of biotin carboxyl carrier protein (AccB), biotin carboxylase (AccC) and two subunits each of ACCase subunit alpha (AccA) and ACCase subunit beta (AccD). Requires Zn(2+) as cofactor.

It localises to the cytoplasm. The enzyme catalyses N(6)-carboxybiotinyl-L-lysyl-[protein] + acetyl-CoA = N(6)-biotinyl-L-lysyl-[protein] + malonyl-CoA. It functions in the pathway lipid metabolism; malonyl-CoA biosynthesis; malonyl-CoA from acetyl-CoA: step 1/1. Component of the acetyl coenzyme A carboxylase (ACC) complex. Biotin carboxylase (BC) catalyzes the carboxylation of biotin on its carrier protein (BCCP) and then the CO(2) group is transferred by the transcarboxylase to acetyl-CoA to form malonyl-CoA. The protein is Acetyl-coenzyme A carboxylase carboxyl transferase subunit beta of Haemophilus ducreyi (strain 35000HP / ATCC 700724).